The sequence spans 157 residues: 2-C-methyl-D-erythritol 2,4-cyclodiphosphate synthase (157 aa).

Residues D8 and H10 each coordinate a divalent metal cation. 4-CDP-2-C-methyl-D-erythritol 2-phosphate is bound by residues 8 to 10 and 34 to 35; these read DVH and HS. H42 contributes to the a divalent metal cation binding site. 4-CDP-2-C-methyl-D-erythritol 2-phosphate-binding positions include 56–58, 61–65, 132–135, F139, and R142; these read DIG, FPDSD, and TTTE.

Belongs to the IspF family. Homotrimer. Requires a divalent metal cation as cofactor.

It carries out the reaction 4-CDP-2-C-methyl-D-erythritol 2-phosphate = 2-C-methyl-D-erythritol 2,4-cyclic diphosphate + CMP. It functions in the pathway isoprenoid biosynthesis; isopentenyl diphosphate biosynthesis via DXP pathway; isopentenyl diphosphate from 1-deoxy-D-xylulose 5-phosphate: step 4/6. Functionally, involved in the biosynthesis of isopentenyl diphosphate (IPP) and dimethylallyl diphosphate (DMAPP), two major building blocks of isoprenoid compounds. Catalyzes the conversion of 4-diphosphocytidyl-2-C-methyl-D-erythritol 2-phosphate (CDP-ME2P) to 2-C-methyl-D-erythritol 2,4-cyclodiphosphate (ME-CPP) with a corresponding release of cytidine 5-monophosphate (CMP). This Syntrophomonas wolfei subsp. wolfei (strain DSM 2245B / Goettingen) protein is 2-C-methyl-D-erythritol 2,4-cyclodiphosphate synthase.